The chain runs to 182 residues: Lipid A acyltransferase PagP (182 aa).

The signal sequence occupies residues 1–21 (MTQYFRALAFFLLLVPATAMA). Residue Cys-22 is the site of N-palmitoyl cysteine attachment. Cys-22 is lipidated: S-diacylglycerol cysteine. Catalysis depends on residues His-55, Asp-98, and Ser-99.

The protein belongs to the lipid A palmitoyltransferase family. Homodimer.

The protein resides in the cell outer membrane. It catalyses the reaction a lipid A + a 1,2-diacyl-sn-glycero-3-phosphocholine = a hepta-acyl lipid A + a 2-acyl-sn-glycero-3-phosphocholine. The enzyme catalyses a lipid IVA + a 1,2-diacyl-sn-glycero-3-phosphocholine = a lipid IVB + a 2-acyl-sn-glycero-3-phosphocholine. It carries out the reaction a lipid IIA + a 1,2-diacyl-sn-glycero-3-phosphocholine = a lipid IIB + a 2-acyl-sn-glycero-3-phosphocholine. Functionally, transfers a fatty acid residue from the sn-1 position of a phospholipid to the N-linked hydroxyfatty acid chain on the proximal unit of lipid A or its precursors. The sequence is that of Lipid A acyltransferase PagP from Bordetella parapertussis (strain 12822 / ATCC BAA-587 / NCTC 13253).